Reading from the N-terminus, the 299-residue chain is tRNA dimethylallyltransferase (299 aa).

13–20 (GPTASGKT) lines the ATP pocket. 15–20 (TASGKT) contacts substrate. An interaction with substrate tRNA region spans residues 38 to 41 (DSRQ).

Belongs to the IPP transferase family. In terms of assembly, monomer. Mg(2+) serves as cofactor.

The enzyme catalyses adenosine(37) in tRNA + dimethylallyl diphosphate = N(6)-dimethylallyladenosine(37) in tRNA + diphosphate. Its function is as follows. Catalyzes the transfer of a dimethylallyl group onto the adenine at position 37 in tRNAs that read codons beginning with uridine, leading to the formation of N6-(dimethylallyl)adenosine (i(6)A). The sequence is that of tRNA dimethylallyltransferase from Prochlorococcus marinus (strain NATL2A).